Here is a 247-residue protein sequence, read N- to C-terminus: Dynein axonemal assembly factor 19 (247 aa).

Residues 12–32 (LEKELHSALQADRKYQRENDA) adopt a coiled-coil conformation.

This sequence belongs to the DNAAF19/PR46b family. Homodimer. As to expression, expressed in all cells bearing motile cilia.

The protein localises to the cytoplasm. Its subcellular location is the cell projection. It localises to the cilium. The protein resides in the flagellum. Functionally, dynein-attachment factor required for cilia motility. The sequence is that of Dynein axonemal assembly factor 19 (dnaaf19) from Danio rerio (Zebrafish).